A 227-amino-acid polypeptide reads, in one-letter code: Nodulation protein W (227 aa).

Residues 21–135 enclose the Response regulatory domain; the sequence is IVFVVEDDIS…ELLDAVVAAT (115 aa). Residue aspartate 70 is modified to 4-aspartylphosphate. The region spanning 151–216 is the HTH luxR-type domain; the sequence is LKSLFETLSP…DLIRMSETLG (66 aa). A DNA-binding region (H-T-H motif) is located at residues 175-194; that stretch reads NKQVAAELGLAEITVKIYRG.

In terms of processing, phosphorylated by NodV.

It is found in the cytoplasm. Member of the two-component regulatory system NodV/NodW probably involved in the regulation of the transcription of genes involved in the nodulation process. In Bradyrhizobium diazoefficiens (strain JCM 10833 / BCRC 13528 / IAM 13628 / NBRC 14792 / USDA 110), this protein is Nodulation protein W (nodW).